The primary structure comprises 181 residues: Peptidyl-tRNA hydrolase 2, mitochondrial (181 aa).

The chain crosses the membrane as a helical span at residues 10–32 (YLVHPGTLSLAAGVACGMCLGWG). Glycyl lysine isopeptide (Lys-Gly) (interchain with G-Cter in ubiquitin) cross-links involve residues K78, K83, K97, K108, K117, and K179.

This sequence belongs to the PTH2 family. As to quaternary structure, monomer. Ubiquitinated by PRKN during mitophagy, leading to its degradation and enhancement of mitophagy. Deubiquitinated by USP30.

It is found in the mitochondrion outer membrane. The catalysed reaction is an N-acyl-L-alpha-aminoacyl-tRNA + H2O = an N-acyl-L-amino acid + a tRNA + H(+). Peptidyl-tRNA hydrolase which releases tRNAs from the ribosome during protein synthesis. Promotes caspase-independent apoptosis by regulating the function of two transcriptional regulators, AES and TLE1. The protein is Peptidyl-tRNA hydrolase 2, mitochondrial (Ptrh2) of Mus musculus (Mouse).